A 309-amino-acid polypeptide reads, in one-letter code: tRNA dimethylallyltransferase (309 aa).

Residue 9 to 16 (GPTAVGKT) coordinates ATP. 11–16 (TAVGKT) contributes to the substrate binding site. The segment at 34-37 (DSMQ) is interaction with substrate tRNA.

The protein belongs to the IPP transferase family. As to quaternary structure, monomer. The cofactor is Mg(2+).

It catalyses the reaction adenosine(37) in tRNA + dimethylallyl diphosphate = N(6)-dimethylallyladenosine(37) in tRNA + diphosphate. Catalyzes the transfer of a dimethylallyl group onto the adenine at position 37 in tRNAs that read codons beginning with uridine, leading to the formation of N6-(dimethylallyl)adenosine (i(6)A). The polypeptide is tRNA dimethylallyltransferase (Clostridium kluyveri (strain NBRC 12016)).